Reading from the N-terminus, the 229-residue chain is Large ribosomal subunit protein uL1 (229 aa).

It belongs to the universal ribosomal protein uL1 family. As to quaternary structure, part of the 50S ribosomal subunit.

In terms of biological role, binds directly to 23S rRNA. The L1 stalk is quite mobile in the ribosome, and is involved in E site tRNA release. Protein L1 is also a translational repressor protein, it controls the translation of the L11 operon by binding to its mRNA. This is Large ribosomal subunit protein uL1 from Clostridium botulinum (strain Loch Maree / Type A3).